A 420-amino-acid polypeptide reads, in one-letter code: Glucose-1-phosphate adenylyltransferase (420 aa).

Alpha-D-glucose 1-phosphate is bound by residues Y107, G172, 187–188, and S205; that span reads EK.

The protein belongs to the bacterial/plant glucose-1-phosphate adenylyltransferase family. Homotetramer.

The enzyme catalyses alpha-D-glucose 1-phosphate + ATP + H(+) = ADP-alpha-D-glucose + diphosphate. It functions in the pathway glycan biosynthesis; glycogen biosynthesis. Functionally, involved in the biosynthesis of ADP-glucose, a building block required for the elongation reactions to produce glycogen. Catalyzes the reaction between ATP and alpha-D-glucose 1-phosphate (G1P) to produce pyrophosphate and ADP-Glc. The chain is Glucose-1-phosphate adenylyltransferase from Rhizobium meliloti (strain 1021) (Ensifer meliloti).